A 384-amino-acid polypeptide reads, in one-letter code: S-adenosylmethionine synthase (384 aa).

Residue His15 coordinates ATP. Residue Asp17 participates in Mg(2+) binding. Glu43 is a binding site for K(+). Glu56 and Gln99 together coordinate L-methionine. The segment at 99–109 (QSPDINQGVDR) is flexible loop. ATP is bound by residues 164–166 (DAK), 230–231 (RF), Asp239, 245–246 (RK), Ala262, and Lys266. An L-methionine-binding site is contributed by Asp239. Position 270 (Lys270) interacts with L-methionine.

It belongs to the AdoMet synthase family. In terms of assembly, homotetramer; dimer of dimers. It depends on Mg(2+) as a cofactor. K(+) serves as cofactor.

It localises to the cytoplasm. The catalysed reaction is L-methionine + ATP + H2O = S-adenosyl-L-methionine + phosphate + diphosphate. It functions in the pathway amino-acid biosynthesis; S-adenosyl-L-methionine biosynthesis; S-adenosyl-L-methionine from L-methionine: step 1/1. Its function is as follows. Catalyzes the formation of S-adenosylmethionine (AdoMet) from methionine and ATP. The overall synthetic reaction is composed of two sequential steps, AdoMet formation and the subsequent tripolyphosphate hydrolysis which occurs prior to release of AdoMet from the enzyme. This is S-adenosylmethionine synthase from Klebsiella pneumoniae (strain 342).